We begin with the raw amino-acid sequence, 418 residues long: Zinc metalloproteinase nas-8 (418 aa).

Positions 1–28 (MMNRASLCRIAVLLCILHLSHLIDSTYA) are cleaved as a signal peptide. The propeptide occupies 29–100 (QSYLTEKDFL…TSKLKSGVRR (72 aa)). A Peptidase M12A domain is found at 101–296 (NGVTSVIKRW…LKINKLYNCP (196 aa)). 5 cysteine pairs are disulfide-bonded: Cys-143/Cys-295, Cys-165/Cys-184, Cys-347/Cys-381, Cys-354/Cys-374, and Cys-361/Cys-378. His-192 serves as a coordination point for Zn(2+). The active site involves Glu-193. Residues His-196 and His-202 each coordinate Zn(2+). In terms of domain architecture, ShKT spans 347 to 381 (CSDRTNLCWRWLDRCRSYFFEKIMKEFCALSCGYC).

The cofactor is Zn(2+).

The protein localises to the secreted. It carries out the reaction Hydrolysis of peptide bonds in substrates containing five or more amino acids, preferentially with Ala in P1', and Pro in P2'.. Its activity is regulated as follows. Inhibited by ethylene glycol-bis(2-aminoethylether)-N,N,N,N-tetraacetic acid (EGTA), ethylenediaminetetraacetic acid (EDTA) and o-phenanthroline. Functionally, metalloprotease. The polypeptide is Zinc metalloproteinase nas-8 (Steinernema carpocapsae (Entomopathogenic nematode)).